The primary structure comprises 307 residues: Probable deoxyhypusine synthase (307 aa).

The Nucleophile role is filled by Lys-278.

This sequence belongs to the deoxyhypusine synthase family. NAD(+) serves as cofactor.

The enzyme catalyses [eIF5A protein]-L-lysine + spermidine = [eIF5A protein]-deoxyhypusine + propane-1,3-diamine. It participates in protein modification; eIF5A hypusination. Functionally, catalyzes the NAD-dependent oxidative cleavage of spermidine and the subsequent transfer of the butylamine moiety of spermidine to the epsilon-amino group of a specific lysine residue of the eIF-5A precursor protein to form the intermediate deoxyhypusine residue. This Methanothermobacter thermautotrophicus (strain ATCC 29096 / DSM 1053 / JCM 10044 / NBRC 100330 / Delta H) (Methanobacterium thermoautotrophicum) protein is Probable deoxyhypusine synthase (dys).